A 496-amino-acid chain; its full sequence is Acyltransferase clz6 (496 aa).

Histidine 163 (proton acceptor) is an active-site residue.

The protein belongs to the plant acyltransferase family. Monomer.

It participates in secondary metabolite biosynthesis. Functionally, acyltransferase; part of the gene cluster that mediates the biosynthesis of squalestatin S1 (SQS1, also known as zaragozic acid A), a heavily oxidized fungal polyketide that offers potent cholesterol lowering activity by targeting squalene synthase (SS). SQS1 is composed of a 2,8-dioxobicyclic[3.2.1]octane-3,4,5-tricarboxyclic acid core that is connected to two lipophilic polyketide arms. These initial steps feature the priming of an unusual benzoic acid starter unit onto the highly reducing polyketide synthase clz14, followed by oxaloacetate extension and product release to generate a tricarboxylic acid containing product. The phenylalanine ammonia lyase (PAL) clz10 and the acyl-CoA ligase clz12 are involved in transforming phenylalanine into benzoyl-CoA. The citrate synthase-like protein clz17 is involved in connecting the C-alpha-carbons of the hexaketide chain and oxaloacetate to afford the tricarboxylic acid unit. The potential hydrolytic enzymes, clz11 and clz13, are in close proximity to pks2 and may participate in product release. On the other side, the tetraketide arm is synthesized by a the squalestatin tetraketide synthase clz2 and enzymatically esterified to the core in the last biosynthetic step, by the acetyltransferase clz6. The biosynthesis of the tetraketide must involve 3 rounds of chain extension. After the first and second rounds methyl-transfer occurs, and in all rounds of extension the ketoreductase and dehydratase are active. The enoyl reductase and C-MeT of clz2 are not active in the final round of extension. The acetyltransferase clz6 appears to have a broad substrate selectivity for its acyl CoA substrate, allowing the in vitro synthesis of novel squalestatins. The biosynthesis of SQS1 requires several oxidative steps likely performed by oxidoreductases clz3, clz15 and clz16. Finally, in support of the identification of the cluster as being responsible for SQS1 production, the cluster contains a gene encoding a putative squalene synthase (SS) clz20, suggesting a likely mechanism for self-resistance. The sequence is that of Acyltransferase clz6 from Cochliobolus lunatus (Filamentous fungus).